The primary structure comprises 351 residues: UDP-N-acetylglucosamine--N-acetylmuramyl-(pentapeptide) pyrophosphoryl-undecaprenol N-acetylglucosamine transferase (351 aa).

Residues 12 to 14, asparagine 124, arginine 160, serine 188, isoleucine 239, 258 to 263, and glutamine 283 each bind UDP-N-acetyl-alpha-D-glucosamine; these read TGG and ALTVCE.

It belongs to the glycosyltransferase 28 family. MurG subfamily.

It localises to the cell inner membrane. The enzyme catalyses di-trans,octa-cis-undecaprenyl diphospho-N-acetyl-alpha-D-muramoyl-L-alanyl-D-glutamyl-meso-2,6-diaminopimeloyl-D-alanyl-D-alanine + UDP-N-acetyl-alpha-D-glucosamine = di-trans,octa-cis-undecaprenyl diphospho-[N-acetyl-alpha-D-glucosaminyl-(1-&gt;4)]-N-acetyl-alpha-D-muramoyl-L-alanyl-D-glutamyl-meso-2,6-diaminopimeloyl-D-alanyl-D-alanine + UDP + H(+). Its pathway is cell wall biogenesis; peptidoglycan biosynthesis. In terms of biological role, cell wall formation. Catalyzes the transfer of a GlcNAc subunit on undecaprenyl-pyrophosphoryl-MurNAc-pentapeptide (lipid intermediate I) to form undecaprenyl-pyrophosphoryl-MurNAc-(pentapeptide)GlcNAc (lipid intermediate II). This Actinobacillus pleuropneumoniae serotype 5b (strain L20) protein is UDP-N-acetylglucosamine--N-acetylmuramyl-(pentapeptide) pyrophosphoryl-undecaprenol N-acetylglucosamine transferase.